We begin with the raw amino-acid sequence, 81 residues long: Putative membrane protein insertion efficiency factor (81 aa).

Belongs to the UPF0161 family.

The protein localises to the cell inner membrane. Could be involved in insertion of integral membrane proteins into the membrane. The sequence is that of Putative membrane protein insertion efficiency factor from Legionella pneumophila (strain Lens).